The primary structure comprises 247 residues: MSRTFFVGGNFKMNGSLESIKAIVERLNASELDPKTEVVISPPFPYLLLAKESLKKPTVSVAGQNSFDKGDGAFTGEVSVAQLKDVGAKWVILGHSERRTINKESSEWIADKTKYALDNGLDVILCIGETIDEKKAGKTLDVVRSQLDPVIAKIKDWSNVVIAYEPVWAIGTGLAATAEDAQQIHHEIRAYLKDKIGAQADKVRIIYGGSVNGKNSGTFKDKSDVDGFLVGGASLKPEFVDIINSRL.

Residues asparagine 10 and lysine 12 each coordinate substrate. Histidine 95 acts as the Electrophile in catalysis. Glutamate 165 functions as the Proton acceptor in the catalytic mechanism.

Belongs to the triosephosphate isomerase family. In terms of assembly, homodimer.

It carries out the reaction D-glyceraldehyde 3-phosphate = dihydroxyacetone phosphate. Its pathway is carbohydrate biosynthesis; gluconeogenesis. It participates in carbohydrate degradation; glycolysis; D-glyceraldehyde 3-phosphate from glycerone phosphate: step 1/1. The protein is Triosephosphate isomerase (TPI1) of Yarrowia lipolytica (strain CLIB 122 / E 150) (Yeast).